The sequence spans 441 residues: Interferon-related developmental regulator 2 (441 aa).

Residues 1-15 (MPRARKGNALRKGGQ) are compositionally biased toward basic residues. Residues 1–51 (MPRARKGNALRKGGQRRGGGARSSTQADSGSSEDEAASEARSTTSDCPSLL) are disordered.

This sequence belongs to the IFRD family. As to quaternary structure, associates with ribosomes; promoting ribosome inactivation.

Ribosome-binding protein that acts as an inhibitor of mRNA translation by promoting ribosome inactivation. Associates with the P- and E-sites of the ribosome and inserts a C-terminal helix into the mRNA exit channel to preclude translation. The protein is Interferon-related developmental regulator 2 of Mus musculus (Mouse).